Reading from the N-terminus, the 346-residue chain is Calcium homeostasis modulator protein 1 (346 aa).

At M1–N21 the chain is on the cytoplasmic side. The interval Q10–A37 is central pore. The helical transmembrane segment at G22–A37 threads the bilayer. At F38–N49 the chain is on the extracellular side. Cystine bridges form between C42–C127 and C44–C161. A helical membrane pass occupies residues A50–N72. A phospholipid-binding region spans residues V63 to V70. At N73–M99 the chain is on the cytoplasmic side. A helical membrane pass occupies residues F100–F125. C101 carries S-palmitoyl cysteine lipidation. The tract at residues Q105–V117 is phospholipid-binding. Residues L126 to L180 lie on the Extracellular side of the membrane. Residue N140 is glycosylated (N-linked (GlcNAc...) asparagine). Residues R181–R206 form a helical membrane-spanning segment. The segment at V192–V202 is phospholipid-binding. The Cytoplasmic portion of the chain corresponds to P207–V346. C208 carries the S-palmitoyl cysteine lipid modification. The segment at L313–V346 is disordered.

It belongs to the CALHM family. In terms of assembly, oligomerizes to form hexamers and octamers. Does not form gap junctions. Associates with CALHM3 as a pore-forming subunit in a hetero-hexameric channel complex. N-glycosylated. Assembly with CALHM3 is associated with N-glycan remodeling and formation of hybrid complex- and high mannose-type glycochains. This N-glycan processing regulates channel trafficking and gating kinetics. In terms of processing, palmitoylated by ZDHHC3, ZDHHC20 and possibly ZDHHC7. Palmitoylation regulates voltage-dependent gating of the channel by shifting it toward more depolarized potentials. As to expression, predominantly expressed in adult brain. Detected also in retinoic acid-differentiated SH-SY5Y cells. Specifically expressed in circumvallate taste bud cells.

Its subcellular location is the cell membrane. It is found in the endoplasmic reticulum membrane. The protein resides in the basolateral cell membrane. The enzyme catalyses ATP(in) = ATP(out). It carries out the reaction Ca(2+)(in) = Ca(2+)(out). The catalysed reaction is Mg(2+)(in) = Mg(2+)(out). It catalyses the reaction Na(+)(in) = Na(+)(out). The enzyme catalyses K(+)(in) = K(+)(out). It carries out the reaction Li(+)(in) = Li(+)(out). The catalysed reaction is Rb(+)(in) = Rb(+)(out). It catalyses the reaction Cs(+)(in) = Cs(+)(out). The enzyme catalyses chloride(in) = chloride(out). Regulated by membrane voltage and extracellular Ca(2+). Inhibited by Gd(3+), ruthenium red, and Zn(2+) and partially inhibited by 2-aminoethoxydiphenyl borate. Functionally, pore-forming subunit of gustatory voltage-gated ion channels required for sensory perception of sweet, bitter and umami tastes. With CALHM3 forms a fast-activating voltage-gated ATP-release channel in type II taste bud cells, ATP acting as a neurotransmitter to activate afferent neural gustatory pathways. Acts both as a voltage-gated and calcium-activated ion channel: mediates neuronal excitability in response to membrane depolarization and low extracellular Ca(2+) concentration. Has poor ion selectivity and forms a wide pore (around 14 Angstroms) that mediates permeation of small ions including Ca(2+), Na(+), K(+) and Cl(-), as well as larger ions such as ATP(4-). Mediates Ca(2+) influx and downstream activation of the ERK1 and ERK2 cascade in neurons. Triggers endoplasmic reticulum stress by reducing the Ca(2+) content of the endoplasmic reticulum. May indirectly control amyloid precursor protein (APP) proteolysis and aggregated amyloid-beta (Abeta) peptides levels in a Ca(2+)-dependent manner. The sequence is that of Calcium homeostasis modulator protein 1 from Homo sapiens (Human).